Reading from the N-terminus, the 214-residue chain is Glucose-6-phosphate isomerase (214 aa).

The Fe cation site is built by H92, H94, E101, and H140.

The protein belongs to the archaeal-type GPI family. Homodimer.

It is found in the cytoplasm. The catalysed reaction is alpha-D-glucose 6-phosphate = beta-D-fructose 6-phosphate. It participates in carbohydrate degradation; glycolysis; D-glyceraldehyde 3-phosphate and glycerone phosphate from D-glucose: step 2/4. This is Glucose-6-phosphate isomerase from Sinorhizobium medicae (strain WSM419) (Ensifer medicae).